Consider the following 105-residue polypeptide: T cell receptor alpha variable 40 (105 aa).

Positions 1 to 19 (MNSSLDFLILILMFGGTSS) are cleaved as a signal peptide. Positions 20 to 105 (NSVKQTGQIT…DSAVYYCLLG (86 aa)) constitute an Ig-like domain. An N-linked (GlcNAc...) asparagine glycan is attached at Asn-39. The cysteines at positions 40 and 102 are disulfide-linked.

In terms of assembly, alpha-beta TR is a heterodimer composed of an alpha and beta chain; disulfide-linked. The alpha-beta TR is associated with the transmembrane signaling CD3 coreceptor proteins to form the TR-CD3 (TcR or TCR). The assembly of alpha-beta TR heterodimers with CD3 occurs in the endoplasmic reticulum where a single alpha-beta TR heterodimer associates with one CD3D-CD3E heterodimer, one CD3G-CD3E heterodimer and one CD247 homodimer forming a stable octameric structure. CD3D-CD3E and CD3G-CD3E heterodimers preferentially associate with TR alpha and TR beta chains, respectively. The association of the CD247 homodimer is the last step of TcR assembly in the endoplasmic reticulum and is required for transport to the cell surface.

It localises to the cell membrane. In terms of biological role, v region of the variable domain of T cell receptor (TR) alpha chain that participates in the antigen recognition. Alpha-beta T cell receptors are antigen specific receptors which are essential to the immune response and are present on the cell surface of T lymphocytes. Recognize peptide-major histocompatibility (MH) (pMH) complexes that are displayed by antigen presenting cells (APC), a prerequisite for efficient T cell adaptive immunity against pathogens. Binding of alpha-beta TR to pMH complex initiates TR-CD3 clustering on the cell surface and intracellular activation of LCK that phosphorylates the ITAM motifs of CD3G, CD3D, CD3E and CD247 enabling the recruitment of ZAP70. In turn ZAP70 phosphorylates LAT, which recruits numerous signaling molecules to form the LAT signalosome. The LAT signalosome propagates signal branching to three major signaling pathways, the calcium, the mitogen-activated protein kinase (MAPK) kinase and the nuclear factor NF-kappa-B (NF-kB) pathways, leading to the mobilization of transcription factors that are critical for gene expression and essential for T cell growth and differentiation. The T cell repertoire is generated in the thymus, by V-(D)-J rearrangement. This repertoire is then shaped by intrathymic selection events to generate a peripheral T cell pool of self-MH restricted, non-autoaggressive T cells. Post-thymic interaction of alpha-beta TR with the pMH complexes shapes TR structural and functional avidity. In Homo sapiens (Human), this protein is T cell receptor alpha variable 40.